The primary structure comprises 350 residues: Small ribosomal subunit protein uS3 (350 aa).

In terms of domain architecture, KH type-2 spans 38 to 106 (IRKMMSRGME…QVQLNILEVK (69 aa)). Residues 211-350 (AEREAQEALQ…TPGTPEKAEE (140 aa)) are disordered. The span at 222-232 (QTRRDRPRRGP) shows a compositional bias: basic residues. The segment covering 261 to 350 (NAPAAETAAS…TPGTPEKAEE (90 aa)) has biased composition (low complexity).

This sequence belongs to the universal ribosomal protein uS3 family. Part of the 30S ribosomal subunit. Forms a tight complex with proteins S10 and S14.

Functionally, binds the lower part of the 30S subunit head. Binds mRNA in the 70S ribosome, positioning it for translation. The sequence is that of Small ribosomal subunit protein uS3 from Frankia alni (strain DSM 45986 / CECT 9034 / ACN14a).